Here is a 103-residue protein sequence, read N- to C-terminus: ATP-dependent Clp protease adapter protein ClpS (103 aa).

It belongs to the ClpS family. Binds to the N-terminal domain of the chaperone ClpA.

Its function is as follows. Involved in the modulation of the specificity of the ClpAP-mediated ATP-dependent protein degradation. In Neisseria meningitidis serogroup A / serotype 4A (strain DSM 15465 / Z2491), this protein is ATP-dependent Clp protease adapter protein ClpS.